We begin with the raw amino-acid sequence, 225 residues long: Phosphoribosylformylglycinamidine synthase subunit PurQ (225 aa).

The Glutamine amidotransferase type-1 domain maps to 4 to 225 (RVGVITFPGT…YSVLDSVISA (222 aa)). Cys-87 acts as the Nucleophile in catalysis. Residues His-196 and Glu-198 contribute to the active site.

Part of the FGAM synthase complex composed of 1 PurL, 1 PurQ and 2 PurS subunits.

The protein localises to the cytoplasm. The catalysed reaction is N(2)-formyl-N(1)-(5-phospho-beta-D-ribosyl)glycinamide + L-glutamine + ATP + H2O = 2-formamido-N(1)-(5-O-phospho-beta-D-ribosyl)acetamidine + L-glutamate + ADP + phosphate + H(+). The enzyme catalyses L-glutamine + H2O = L-glutamate + NH4(+). Its pathway is purine metabolism; IMP biosynthesis via de novo pathway; 5-amino-1-(5-phospho-D-ribosyl)imidazole from N(2)-formyl-N(1)-(5-phospho-D-ribosyl)glycinamide: step 1/2. Its function is as follows. Part of the phosphoribosylformylglycinamidine synthase complex involved in the purines biosynthetic pathway. Catalyzes the ATP-dependent conversion of formylglycinamide ribonucleotide (FGAR) and glutamine to yield formylglycinamidine ribonucleotide (FGAM) and glutamate. The FGAM synthase complex is composed of three subunits. PurQ produces an ammonia molecule by converting glutamine to glutamate. PurL transfers the ammonia molecule to FGAR to form FGAM in an ATP-dependent manner. PurS interacts with PurQ and PurL and is thought to assist in the transfer of the ammonia molecule from PurQ to PurL. The sequence is that of Phosphoribosylformylglycinamidine synthase subunit PurQ from Rhodococcus jostii (strain RHA1).